Reading from the N-terminus, the 373-residue chain is Dual-specificity RNA methyltransferase RlmN (373 aa).

The active-site Proton acceptor is the glutamate 94. Residues 100-339 (EDDRATLCVS…VIVRKTRGDD (240 aa)) form the Radical SAM core domain. Cysteines 107 and 344 form a disulfide. [4Fe-4S] cluster is bound by residues cysteine 114, cysteine 118, and cysteine 121. Residues 168–169 (GE), serine 200, 222–224 (SIH), and asparagine 301 contribute to the S-adenosyl-L-methionine site. Catalysis depends on cysteine 344, which acts as the S-methylcysteine intermediate.

The protein belongs to the radical SAM superfamily. RlmN family. Requires [4Fe-4S] cluster as cofactor.

Its subcellular location is the cytoplasm. It carries out the reaction adenosine(2503) in 23S rRNA + 2 reduced [2Fe-2S]-[ferredoxin] + 2 S-adenosyl-L-methionine = 2-methyladenosine(2503) in 23S rRNA + 5'-deoxyadenosine + L-methionine + 2 oxidized [2Fe-2S]-[ferredoxin] + S-adenosyl-L-homocysteine. The catalysed reaction is adenosine(37) in tRNA + 2 reduced [2Fe-2S]-[ferredoxin] + 2 S-adenosyl-L-methionine = 2-methyladenosine(37) in tRNA + 5'-deoxyadenosine + L-methionine + 2 oxidized [2Fe-2S]-[ferredoxin] + S-adenosyl-L-homocysteine. Functionally, specifically methylates position 2 of adenine 2503 in 23S rRNA and position 2 of adenine 37 in tRNAs. m2A2503 modification seems to play a crucial role in the proofreading step occurring at the peptidyl transferase center and thus would serve to optimize ribosomal fidelity. In Shewanella sp. (strain MR-7), this protein is Dual-specificity RNA methyltransferase RlmN.